Reading from the N-terminus, the 201-residue chain is MARRELLTPGLKVGLLGGSFNPAHEGHLHVTRMCLRALGLDRVWWLVSPQNPLKSDAGMASFDRRLASAEKMARDPRICVSDIEARLGTRYTVDTLAALTSRFPQIRFVWLMGADNLIQLPHWARWRDIVQTVPIAVYPRPGFTLKARLSPAATALRDVTLDATDAALLPLLTAPALAFLDGPESSQSATSIRERGGWSLR.

The interval 182 to 201 (GPESSQSATSIRERGGWSLR) is disordered. The segment covering 192 to 201 (IRERGGWSLR) has biased composition (basic and acidic residues).

This sequence belongs to the NadD family.

The enzyme catalyses nicotinate beta-D-ribonucleotide + ATP + H(+) = deamido-NAD(+) + diphosphate. It functions in the pathway cofactor biosynthesis; NAD(+) biosynthesis; deamido-NAD(+) from nicotinate D-ribonucleotide: step 1/1. In terms of biological role, catalyzes the reversible adenylation of nicotinate mononucleotide (NaMN) to nicotinic acid adenine dinucleotide (NaAD). The polypeptide is Probable nicotinate-nucleotide adenylyltransferase (Parvibaculum lavamentivorans (strain DS-1 / DSM 13023 / NCIMB 13966)).